A 497-amino-acid polypeptide reads, in one-letter code: Glycerol kinase (497 aa).

Thr11 contributes to the ADP binding site. Residues Thr11, Thr12, and Ser13 each coordinate ATP. Thr11 is a binding site for sn-glycerol 3-phosphate. Arg15 provides a ligand contact to ADP. The sn-glycerol 3-phosphate site is built by Arg81, Glu82, Tyr134, and Asp244. The glycerol site is built by Arg81, Glu82, Tyr134, Asp244, and Gln245. ADP contacts are provided by Thr266 and Gly309. ATP is bound by residues Thr266, Gly309, Gln313, and Gly410. 2 residues coordinate ADP: Gly410 and Asn414.

Belongs to the FGGY kinase family.

The catalysed reaction is glycerol + ATP = sn-glycerol 3-phosphate + ADP + H(+). It participates in polyol metabolism; glycerol degradation via glycerol kinase pathway; sn-glycerol 3-phosphate from glycerol: step 1/1. Inhibited by fructose 1,6-bisphosphate (FBP). Its function is as follows. Key enzyme in the regulation of glycerol uptake and metabolism. Catalyzes the phosphorylation of glycerol to yield sn-glycerol 3-phosphate. This Fusobacterium nucleatum subsp. nucleatum (strain ATCC 25586 / DSM 15643 / BCRC 10681 / CIP 101130 / JCM 8532 / KCTC 2640 / LMG 13131 / VPI 4355) protein is Glycerol kinase.